We begin with the raw amino-acid sequence, 603 residues long: uncharacterized protein (603 aa).

Positions 496 to 513 are enriched in acidic residues; it reads EEEDQEEDDTSDDDDQEK. 2 disordered regions span residues 496-536 and 549-568; these read EEED…GSLE and AVAE…DTAQ. Positions 517–533 are enriched in polar residues; the sequence is NPQNNIGSLTRTPSSPG.

Belongs to the herpesviridae US22 family.

This is an uncharacterized protein from Human cytomegalovirus (strain AD169) (HHV-5).